Here is a 364-residue protein sequence, read N- to C-terminus: Dihydroorotate dehydrogenase (quinone) (364 aa).

Residues Ala-61–Lys-65 and Ser-85 each bind FMN. Lys-65 contacts substrate. Asn-110–Phe-114 is a substrate binding site. FMN is bound by residues Asn-139 and Asn-170. Asn-170 contacts substrate. The active-site Nucleophile is Ser-173. Residue Asn-175 participates in substrate binding. FMN contacts are provided by Lys-214 and Ser-242. Asn-243–Thr-244 contacts substrate. FMN-binding positions include Gly-266, Gly-295, and Tyr-316–Ser-317.

This sequence belongs to the dihydroorotate dehydrogenase family. Type 2 subfamily. Monomer. The cofactor is FMN.

The protein resides in the cell membrane. It catalyses the reaction (S)-dihydroorotate + a quinone = orotate + a quinol. It functions in the pathway pyrimidine metabolism; UMP biosynthesis via de novo pathway; orotate from (S)-dihydroorotate (quinone route): step 1/1. In terms of biological role, catalyzes the conversion of dihydroorotate to orotate with quinone as electron acceptor. The polypeptide is Dihydroorotate dehydrogenase (quinone) (Bradyrhizobium sp. (strain ORS 278)).